Consider the following 82-residue polypeptide: Large ribosomal subunit protein bL27 (82 aa).

The disordered stretch occupies residues 1–20; it reads MAHKKGASSSRNGRDSNPQY. A compositionally biased stretch (polar residues) spans 7–19; the sequence is ASSSRNGRDSNPQ.

The protein belongs to the bacterial ribosomal protein bL27 family.

This Bifidobacterium longum (strain NCC 2705) protein is Large ribosomal subunit protein bL27.